The sequence spans 206 residues: Ribosomal RNA small subunit methyltransferase G (206 aa).

Residues glycine 71, phenylalanine 76, 122–123 (AE), and arginine 135 contribute to the S-adenosyl-L-methionine site.

It belongs to the methyltransferase superfamily. RNA methyltransferase RsmG family.

The protein localises to the cytoplasm. Its function is as follows. Specifically methylates the N7 position of a guanine in 16S rRNA. The sequence is that of Ribosomal RNA small subunit methyltransferase G from Bacteroides thetaiotaomicron (strain ATCC 29148 / DSM 2079 / JCM 5827 / CCUG 10774 / NCTC 10582 / VPI-5482 / E50).